The chain runs to 904 residues: Translation initiation factor IF-2 (904 aa).

Positions 239–316 are disordered; that stretch reads QAATQAKTSE…DDGQGSFQAP (78 aa). Positions 248–278 are enriched in basic and acidic residues; it reads EGAEKGTLHKKPETPGKKGDKGGRAADDGKK. The 168-residue stretch at 404 to 571 folds into the tr-type G domain; it reads HRAPVVTVMG…QVLLQAEILE (168 aa). A G1 region spans residues 413–420; it reads GHVDHGKT. Position 413–420 (413–420) interacts with GTP; that stretch reads GHVDHGKT. Residues 438-442 are G2; that stretch reads GITQH. The tract at residues 459-462 is G3; sequence DTPG. Residues 459 to 463 and 513 to 516 each bind GTP; these read DTPGH and NKID. A G4 region spans residues 513–516; it reads NKID. The tract at residues 549–551 is G5; sequence SAK.

Belongs to the TRAFAC class translation factor GTPase superfamily. Classic translation factor GTPase family. IF-2 subfamily.

Its subcellular location is the cytoplasm. Its function is as follows. One of the essential components for the initiation of protein synthesis. Protects formylmethionyl-tRNA from spontaneous hydrolysis and promotes its binding to the 30S ribosomal subunits. Also involved in the hydrolysis of GTP during the formation of the 70S ribosomal complex. The sequence is that of Translation initiation factor IF-2 from Dechloromonas aromatica (strain RCB).